Reading from the N-terminus, the 462-residue chain is Probable protein phosphatase 2C 1 (462 aa).

A PPM-type phosphatase domain is found at 60–362 (SSCIFTQQGR…DDCAVVCLFL (303 aa)). Mn(2+)-binding residues include D95, G96, D307, and D353. 2 disordered regions span residues 369-394 (ETSD…QGAE) and 421-443 (EADN…LEGV). Polar residues predominate over residues 376–385 (QCFSSATNAV). Over residues 424–434 (NAEKEKTREGE) the composition is skewed to basic and acidic residues.

This sequence belongs to the PP2C family. As to quaternary structure, interacts with GCN5. Mg(2+) serves as cofactor. Mn(2+) is required as a cofactor.

The catalysed reaction is O-phospho-L-seryl-[protein] + H2O = L-seryl-[protein] + phosphate. It carries out the reaction O-phospho-L-threonyl-[protein] + H2O = L-threonyl-[protein] + phosphate. Functionally, may act as negative regulator of GCN5. The chain is Probable protein phosphatase 2C 1 (PPC6-6) from Arabidopsis thaliana (Mouse-ear cress).